The primary structure comprises 376 residues: Transcription initiation factor IIA subunit 1 (376 aa).

Ala2 carries the N-acetylalanine modification. Composition is skewed to low complexity over residues 69–79 and 89–105; these read QVQQQHQPQQQ and QAQP…TQQV. Disordered regions lie at residues 69–107, 247–266, and 274–329; these read QVQQ…QVLI, QAQI…AQTQ, and DGTG…QELF. Ser280, Ser281, Ser316, and Ser321 each carry phosphoserine; by TAF1. The segment covering 280-329 has biased composition (acidic residues); sequence SSEEDEDEEEDYDDDEEEDKEKDGAEDGQVEEEPLNSEDDVSDEEGQELF. Residues His343 and Arg344 each coordinate DNA.

It belongs to the TFIIA subunit 1 family. In terms of assembly, TFIIA is a heterodimer of the large unprocessed subunit 1 and a small subunit gamma. It was originally believed to be a heterotrimer of an alpha (p35), a beta (p19) and a gamma subunit (p12). TFIIA forms a complex with TBP. Part of TBP-based Pol II pre-initiation complex (PIC), in which Pol II core assembles with general transcription factors and other specific initiation factors including GTF2E1, GTF2E2, GTF2F1, GTF2F2, TCEA1, ERCC2, ERCC3, GTF2H2, GTF2H3, GTF2H4, GTF2H5, GTF2A1, GTF2A2, GTF2B and TBP; this large multi-subunit PIC complex mediates DNA unwinding and targets Pol II core to the transcription start site where the first phosphodiester bond forms. In terms of processing, the alpha and beta subunits are postranslationally produced from the precursor form by TASP1. The cleavage promotes proteasomal degradation.

The protein resides in the nucleus. Its function is as follows. TFIIA is a component of the transcription machinery of RNA polymerase II and plays an important role in transcriptional activation. TFIIA in a complex with TBP mediates transcriptional activity. The protein is Transcription initiation factor IIA subunit 1 (GTF2A1) of Homo sapiens (Human).